The primary structure comprises 273 residues: Putative phosphoenolpyruvate synthase regulatory protein (273 aa).

154 to 161 is a binding site for ADP; that stretch reads GVSRSGKT.

It belongs to the pyruvate, phosphate/water dikinase regulatory protein family. PSRP subfamily.

The enzyme catalyses [pyruvate, water dikinase] + ADP = [pyruvate, water dikinase]-phosphate + AMP + H(+). It catalyses the reaction [pyruvate, water dikinase]-phosphate + phosphate + H(+) = [pyruvate, water dikinase] + diphosphate. Its function is as follows. Bifunctional serine/threonine kinase and phosphorylase involved in the regulation of the phosphoenolpyruvate synthase (PEPS) by catalyzing its phosphorylation/dephosphorylation. The sequence is that of Putative phosphoenolpyruvate synthase regulatory protein from Neisseria meningitidis serogroup B (strain ATCC BAA-335 / MC58).